We begin with the raw amino-acid sequence, 156 residues long: Large ribosomal subunit protein uL15 (156 aa).

The disordered stretch occupies residues arginine 25–valine 48. Residues threonine 34–lysine 43 are compositionally biased toward basic residues.

The protein belongs to the universal ribosomal protein uL15 family. As to quaternary structure, part of the 50S ribosomal subunit.

Its function is as follows. Binds to the 23S rRNA. The polypeptide is Large ribosomal subunit protein uL15 (Wolbachia pipientis wMel).